The sequence spans 1460 residues: Cilia- and flagella-associated protein 43 (1460 aa).

WD repeat units follow at residues 46-87 (EGRY…HLQC), 91-132 (VATV…RLVK), 184-221 (SKGHYFHSCVWGTEGLYCGAGRGQVVLLDELRTDMKNY), 303-342 (RRRSASDTVKLLVLGGLVVIVCLDGSLVTYDQDTNTAGHT), 428-468 (IFAC…DSAS), 529-569 (MRDH…MKLP), 589-628 (FGRGGITCLSVWNAAGGFVCGGNDSVVHLVPVGKSPIHYS), 911-951 (EIDP…VTEV), and 1129-1170 (NRRF…CRAV). Coiled coils occupy residues 1170 to 1214 (VVEA…AEEA) and 1399 to 1446 (LGEH…LREA).

This sequence belongs to the CFAP43 family.

It localises to the cell projection. The protein resides in the cilium. The protein localises to the flagellum. It is found in the cytoplasm. Its subcellular location is the cytoskeleton. It localises to the flagellum axoneme. Functionally, flagellar protein involved in flagellum axoneme organization and function. The sequence is that of Cilia- and flagella-associated protein 43 from Trypanosoma brucei brucei (strain 927/4 GUTat10.1).